Here is a 327-residue protein sequence, read N- to C-terminus: Acetyl-coenzyme A carboxylase carboxyl transferase subunit beta (327 aa).

One can recognise a CoA carboxyltransferase N-terminal domain in the interval 24 to 293; the sequence is LWIKCPDTGQ…LTVTTAVEAP (270 aa). A compositionally biased stretch (low complexity) spans 293 to 311; that stretch reads PAEAAAKAEPEATTTEQPV. Residues 293–327 form a disordered region; it reads PAEAAAKAEPEATTTEQPVAPAPTEPPAQPAAPQA. Residues 312–327 are compositionally biased toward pro residues; the sequence is APAPTEPPAQPAAPQA.

Belongs to the AccD/PCCB family. Acetyl-CoA carboxylase is a heterohexamer composed of biotin carboxyl carrier protein (AccB), biotin carboxylase (AccC) and two subunits each of ACCase subunit alpha (AccA) and ACCase subunit beta (AccD).

Its subcellular location is the cytoplasm. The enzyme catalyses N(6)-carboxybiotinyl-L-lysyl-[protein] + acetyl-CoA = N(6)-biotinyl-L-lysyl-[protein] + malonyl-CoA. The protein operates within lipid metabolism; malonyl-CoA biosynthesis; malonyl-CoA from acetyl-CoA: step 1/1. Component of the acetyl coenzyme A carboxylase (ACC) complex. Biotin carboxylase (BC) catalyzes the carboxylation of biotin on its carrier protein (BCCP) and then the CO(2) group is transferred by the transcarboxylase to acetyl-CoA to form malonyl-CoA. In Rhodopseudomonas palustris (strain TIE-1), this protein is Acetyl-coenzyme A carboxylase carboxyl transferase subunit beta.